We begin with the raw amino-acid sequence, 258 residues long: Imidazole glycerol phosphate synthase subunit HisF (258 aa).

Residues aspartate 11 and aspartate 130 contribute to the active site.

It belongs to the HisA/HisF family. As to quaternary structure, heterodimer of HisH and HisF.

Its subcellular location is the cytoplasm. The enzyme catalyses 5-[(5-phospho-1-deoxy-D-ribulos-1-ylimino)methylamino]-1-(5-phospho-beta-D-ribosyl)imidazole-4-carboxamide + L-glutamine = D-erythro-1-(imidazol-4-yl)glycerol 3-phosphate + 5-amino-1-(5-phospho-beta-D-ribosyl)imidazole-4-carboxamide + L-glutamate + H(+). The protein operates within amino-acid biosynthesis; L-histidine biosynthesis; L-histidine from 5-phospho-alpha-D-ribose 1-diphosphate: step 5/9. Functionally, IGPS catalyzes the conversion of PRFAR and glutamine to IGP, AICAR and glutamate. The HisF subunit catalyzes the cyclization activity that produces IGP and AICAR from PRFAR using the ammonia provided by the HisH subunit. The chain is Imidazole glycerol phosphate synthase subunit HisF from Escherichia fergusonii (strain ATCC 35469 / DSM 13698 / CCUG 18766 / IAM 14443 / JCM 21226 / LMG 7866 / NBRC 102419 / NCTC 12128 / CDC 0568-73).